We begin with the raw amino-acid sequence, 834 residues long: DNA gyrase subunit A (834 aa).

Residues 34–500 (LPDIRDGLKP…ADDIRDIEDI (467 aa)) enclose the Topo IIA-type catalytic domain. The active-site O-(5'-phospho-DNA)-tyrosine intermediate is Tyr122. The short motif at 527–533 (QRRGGHG) is the GyrA-box element. Residues 810 to 834 (LSSNENDDEVLSGSEEECSDTVSLR) are disordered. Acidic residues predominate over residues 814–828 (ENDDEVLSGSEEECS).

This sequence belongs to the type II topoisomerase GyrA/ParC subunit family. Heterotetramer, composed of two GyrA and two GyrB chains. In the heterotetramer, GyrA contains the active site tyrosine that forms a transient covalent intermediate with DNA, while GyrB binds cofactors and catalyzes ATP hydrolysis.

The protein localises to the cytoplasm. The enzyme catalyses ATP-dependent breakage, passage and rejoining of double-stranded DNA.. Its function is as follows. A type II topoisomerase that negatively supercoils closed circular double-stranded (ds) DNA in an ATP-dependent manner to modulate DNA topology and maintain chromosomes in an underwound state. Negative supercoiling favors strand separation, and DNA replication, transcription, recombination and repair, all of which involve strand separation. Also able to catalyze the interconversion of other topological isomers of dsDNA rings, including catenanes and knotted rings. Type II topoisomerases break and join 2 DNA strands simultaneously in an ATP-dependent manner. This chain is DNA gyrase subunit A, found in Chlamydia pneumoniae (Chlamydophila pneumoniae).